The primary structure comprises 341 residues: Cytochrome c biogenesis protein CcsA (341 aa).

The next 8 helical transmembrane spans lie at 16–36, 37–57, 68–88, 97–117, 142–162, 249–269, 276–296, and 310–330; these read LILL…GMSI, LPTL…TLLG, LSNL…VHLI, LVGV…ALSL, VMML…AFLI, IIGL…VWAN, WSWD…AAYL, and AILA…VNLL.

This sequence belongs to the CcmF/CycK/Ccl1/NrfE/CcsA family. May interact with ccs1.

The protein resides in the cellular thylakoid membrane. Its function is as follows. Required during biogenesis of c-type cytochromes (cytochrome c6 and cytochrome f) at the step of heme attachment. The polypeptide is Cytochrome c biogenesis protein CcsA (Rippkaea orientalis (strain PCC 8801 / RF-1) (Cyanothece sp. (strain PCC 8801))).